The chain runs to 294 residues: Nucleotide-binding protein LCA_0526 (294 aa).

An ATP-binding site is contributed by 12–19; the sequence is GMSGAGKT. Residue 62–65 coordinates GTP; sequence DLRS.

Belongs to the RapZ-like family.

Its function is as follows. Displays ATPase and GTPase activities. The chain is Nucleotide-binding protein LCA_0526 from Latilactobacillus sakei subsp. sakei (strain 23K) (Lactobacillus sakei subsp. sakei).